A 614-amino-acid polypeptide reads, in one-letter code: Sodium- and chloride-dependent betaine transporter (614 aa).

The segment at 1–33 is disordered; the sequence is MDRKVAVPEDGPPVVSWLPEEGEKLDQEGEDQV. Topologically, residues 1–44 are cytoplasmic; it reads MDRKVAVPEDGPPVVSWLPEEGEKLDQEGEDQVKDRGQWTNKME. Residues 21-33 show a composition bias toward basic and acidic residues; it reads EGEKLDQEGEDQV. 3 helical membrane-spanning segments follow: residues 45–65, 73–92, and 117–137; these read FVLS…FPYL, AFFI…VFFL, and GIGL…IIIL. The Extracellular portion of the chain corresponds to 138–210; sequence AWALFYLFSS…SGIHDLGALR (73 aa). A disulfide bridge connects residues Cys157 and Cys166. Asn171 and Asn183 each carry an N-linked (GlcNAc...) asparagine glycan. 9 helical membrane-spanning segments follow: residues 211–229, 238–255, 291–308, 320–341, 374–393, 423–441, 458–478, 499–518, and 538–556; these read WELA…FCIW, VVYF…ILLI, IFFS…LGSY, IALC…FSIL, MPLS…FLGL, LLIL…FLVT, GICL…VYGA, ISWL…FSLS, and IGWF…FVII. Residues 557–614 are Cytoplasmic-facing; the sequence is TLLKTRGSFKKRLRQLTTPDPSLPQPKQHLYLDGGTSQDCGPSPTKEGLIVGEKETHL. The disordered stretch occupies residues 591-614; it reads GTSQDCGPSPTKEGLIVGEKETHL.

This sequence belongs to the sodium:neurotransmitter symporter (SNF) (TC 2.A.22) family. SLC6A12 subfamily. As to quaternary structure, interacts with LIN7C. Kidney.

The protein localises to the basolateral cell membrane. It localises to the cell membrane. The enzyme catalyses 4-aminobutanoate(out) + chloride(out) + 3 Na(+)(out) = 4-aminobutanoate(in) + chloride(in) + 3 Na(+)(in). It carries out the reaction glycine betaine(out) + 2 chloride(out) + 3 Na(+)(out) = glycine betaine(in) + 2 chloride(in) + 3 Na(+)(in). Transporter that mediates cellular uptake of betaine and GABA in a sodium- and chloride-dependent process. May have a role in regulation of GABAergic transmission in the brain through the reuptake of GABA into presynaptic terminals, as well as in osmotic regulation. Probably also involved in renal and hepatic osmotic regulation. This is Sodium- and chloride-dependent betaine transporter (SLC6A12) from Canis lupus familiaris (Dog).